Here is a 1128-residue protein sequence, read N- to C-terminus: Translation initiation factor IF-2 (1128 aa).

Residues 57 to 519 (NSDKQILSIN…KETTRQRQKR (463 aa)) are disordered. The span at 70 to 83 (NKKDNYKQNKEDKS) shows a compositional bias: basic and acidic residues. A compositionally biased stretch (low complexity) spans 100–110 (KKQLLNKPLNK). Residues 120-146 (QLKNPNKPNIYNSSQSQANLTNQNTKS) show a composition bias toward polar residues. Over residues 147-158 (KPSEHFNKDKKT) the composition is skewed to basic and acidic residues. Residues 182–196 (KNINNNLKSNESSKN) are compositionally biased toward low complexity. The span at 201–214 (GDKRELSLKPDQNR) shows a compositional bias: basic and acidic residues. 2 stretches are compositionally biased toward polar residues: residues 243-267 (KQNN…NRPG) and 386-397 (AKTNNQKQNIES). Residues 432 to 445 (RKDWDDSAKLEALR) are compositionally biased toward basic and acidic residues. The segment covering 499 to 519 (HKSTKQFKKKKKETTRQRQKR) has biased composition (basic residues). The tr-type G domain occupies 620 to 792 (KRPPVITVMG…ILLVSEVEDL (173 aa)). Residues 629–636 (GHVDHGKT) are G1. 629–636 (GHVDHGKT) lines the GTP pocket. A G2 region spans residues 654–658 (GITQH). Positions 679-682 (DTPG) are G3. GTP contacts are provided by residues 679 to 683 (DTPGH) and 733 to 736 (NKID). Residues 733–736 (NKID) are G4. The interval 769-771 (SAI) is G5.

The protein belongs to the TRAFAC class translation factor GTPase superfamily. Classic translation factor GTPase family. IF-2 subfamily.

Its subcellular location is the cytoplasm. One of the essential components for the initiation of protein synthesis. Protects formylmethionyl-tRNA from spontaneous hydrolysis and promotes its binding to the 30S ribosomal subunits. Also involved in the hydrolysis of GTP during the formation of the 70S ribosomal complex. This is Translation initiation factor IF-2 from Prochlorococcus marinus (strain MIT 9312).